The sequence spans 130 residues: Large ribosomal subunit protein bL12 (130 aa).

This sequence belongs to the bacterial ribosomal protein bL12 family. In terms of assembly, homodimer. Part of the ribosomal stalk of the 50S ribosomal subunit. Forms a multimeric L10(L12)X complex, where L10 forms an elongated spine to which 2 to 4 L12 dimers bind in a sequential fashion. Binds GTP-bound translation factors.

In terms of biological role, forms part of the ribosomal stalk which helps the ribosome interact with GTP-bound translation factors. Is thus essential for accurate translation. The sequence is that of Large ribosomal subunit protein bL12 from Yersinia pestis bv. Antiqua (strain Angola).